The chain runs to 89 residues: Small ribosomal subunit protein uS15 (89 aa).

Residues 1-23 (MTLNTQEKQKLINTHQNHGTDTG) are disordered.

This sequence belongs to the universal ribosomal protein uS15 family. Part of the 30S ribosomal subunit. Forms a bridge to the 50S subunit in the 70S ribosome, contacting the 23S rRNA.

Functionally, one of the primary rRNA binding proteins, it binds directly to 16S rRNA where it helps nucleate assembly of the platform of the 30S subunit by binding and bridging several RNA helices of the 16S rRNA. In terms of biological role, forms an intersubunit bridge (bridge B4) with the 23S rRNA of the 50S subunit in the ribosome. The sequence is that of Small ribosomal subunit protein uS15 from Prochlorococcus marinus (strain MIT 9211).